The following is a 289-amino-acid chain: Acetyl-coenzyme A carboxylase carboxyl transferase subunit beta (289 aa).

Residues 34–289 (MWVKCNKCGE…KLINMHQNSF (256 aa)) enclose the CoA carboxyltransferase N-terminal domain. Zn(2+) contacts are provided by Cys-38, Cys-41, Cys-57, and Cys-60. The segment at 38–60 (CNKCGEILYQNDLEKNYMVCNLC) adopts a C4-type zinc-finger fold.

Belongs to the AccD/PCCB family. Acetyl-CoA carboxylase is a heterohexamer composed of biotin carboxyl carrier protein (AccB), biotin carboxylase (AccC) and two subunits each of ACCase subunit alpha (AccA) and ACCase subunit beta (AccD). It depends on Zn(2+) as a cofactor.

The protein localises to the cytoplasm. It catalyses the reaction N(6)-carboxybiotinyl-L-lysyl-[protein] + acetyl-CoA = N(6)-biotinyl-L-lysyl-[protein] + malonyl-CoA. It participates in lipid metabolism; malonyl-CoA biosynthesis; malonyl-CoA from acetyl-CoA: step 1/1. In terms of biological role, component of the acetyl coenzyme A carboxylase (ACC) complex. Biotin carboxylase (BC) catalyzes the carboxylation of biotin on its carrier protein (BCCP) and then the CO(2) group is transferred by the transcarboxylase to acetyl-CoA to form malonyl-CoA. The protein is Acetyl-coenzyme A carboxylase carboxyl transferase subunit beta of Clostridium botulinum (strain ATCC 19397 / Type A).